The chain runs to 181 residues: Inorganic pyrophosphatase 2 (181 aa).

Substrate-binding residues include K30, R44, and Y56. Mg(2+)-binding residues include D66, D71, and D103. Substrate is bound at residue Y142.

Belongs to the PPase family. In terms of assembly, homohexamer. Mg(2+) serves as cofactor.

It is found in the cytoplasm. The enzyme catalyses diphosphate + H2O = 2 phosphate + H(+). In terms of biological role, catalyzes the hydrolysis of inorganic pyrophosphate (PPi) forming two phosphate ions. The polypeptide is Inorganic pyrophosphatase 2 (Pseudomonas syringae pv. tomato (strain ATCC BAA-871 / DC3000)).